Reading from the N-terminus, the 182-residue chain is Putative colanic acid biosynthesis acetyltransferase WcaF (182 aa).

It belongs to the transferase hexapeptide repeat family.

It participates in slime biogenesis; slime polysaccharide biosynthesis. The sequence is that of Putative colanic acid biosynthesis acetyltransferase WcaF (wcaF) from Shigella flexneri.